The sequence spans 379 residues: tRNA (guanine(26)-N(2))-dimethyltransferase (379 aa).

The disordered stretch occupies residues 1-26 (MECREITEGSTTFTAPVQDETTQFPP). The region spanning 4–369 (REITEGSTTF…APLPLIEEKI (366 aa)) is the Trm1 methyltransferase domain. Polar residues predominate over residues 8–25 (EGSTTFTAPVQDETTQFP). S-adenosyl-L-methionine is bound by residues R41, R66, D82, D108, and A109. Residues C237, C240, C257, and C260 each coordinate Zn(2+).

Belongs to the class I-like SAM-binding methyltransferase superfamily. Trm1 family.

It catalyses the reaction guanosine(26) in tRNA + 2 S-adenosyl-L-methionine = N(2)-dimethylguanosine(26) in tRNA + 2 S-adenosyl-L-homocysteine + 2 H(+). In terms of biological role, dimethylates a single guanine residue at position 26 of a number of tRNAs using S-adenosyl-L-methionine as donor of the methyl groups. This chain is tRNA (guanine(26)-N(2))-dimethyltransferase, found in Methanocorpusculum labreanum (strain ATCC 43576 / DSM 4855 / Z).